We begin with the raw amino-acid sequence, 123 residues long: Large ribosomal subunit protein uL29 (123 aa).

This sequence belongs to the universal ribosomal protein uL29 family. As to quaternary structure, component of the large ribosomal subunit.

The protein localises to the cytoplasm. Component of the large ribosomal subunit. The ribosome is a large ribonucleoprotein complex responsible for the synthesis of proteins in the cell. This Ictalurus punctatus (Channel catfish) protein is Large ribosomal subunit protein uL29 (rpl35).